The chain runs to 30 residues: MIDDSQIFVALLFALVSAVLAIRLGKELYQ.

A helical transmembrane segment spans residues 7-26 (IFVALLFALVSAVLAIRLGK).

It belongs to the PsaM family.

It is found in the plastid. The protein localises to the chloroplast thylakoid membrane. This Porphyra purpurea (Red seaweed) protein is Photosystem I reaction center subunit XII.